The chain runs to 296 residues: Protoheme IX farnesyltransferase (296 aa).

Topologically, residues 1-9 (MMFKQYLQV) are cytoplasmic. A helical transmembrane segment spans residues 10 to 28 (TKPGIIFGNLISVIGGFLL). Topologically, residues 29–37 (ASKGSIDYP) are periplasmic. Residues 38-56 (LFIYTLVGVSLVVASGCVF) form a helical membrane-spanning segment. Over 57-78 (NNYIDRDIDRKMERTKNRVLVK) the chain is Cytoplasmic. The helical transmembrane segment at 79 to 97 (GLISPGVSLVYATLLGIAG) threads the bilayer. Topologically, residues 98-107 (FMLLWFGANP) are periplasmic. Residues 108–126 (LACWLGVMGFVVYVGVYSL) traverse the membrane as a helical segment. Residues 127-197 (YMKRHSVYGT…YQAANIPVLP (71 aa)) are Cytoplasmic-facing. The helical transmembrane segment at 198-216 (VIKGISVAKNHITLYIIAF) threads the bilayer. Residues 217–228 (AVATLMLTLGGY) lie on the Periplasmic side of the membrane. A helical transmembrane segment spans residues 229 to 247 (AGYKYLVVAAAVSVWWLGM). The Cytoplasmic segment spans residues 248–268 (ALRGYKVEDDKVWARKLFGFS). Residues 269–287 (IIAITALSIMMSVDFMVPN) form a helical membrane-spanning segment. At 288–296 (SQNLLTYVW) the chain is on the periplasmic side.

The protein belongs to the UbiA prenyltransferase family. Protoheme IX farnesyltransferase subfamily.

Its subcellular location is the cell inner membrane. The enzyme catalyses heme b + (2E,6E)-farnesyl diphosphate + H2O = Fe(II)-heme o + diphosphate. It functions in the pathway porphyrin-containing compound metabolism; heme O biosynthesis; heme O from protoheme: step 1/1. Functionally, converts heme B (protoheme IX) to heme O by substitution of the vinyl group on carbon 2 of heme B porphyrin ring with a hydroxyethyl farnesyl side group. The sequence is that of Protoheme IX farnesyltransferase from Salmonella typhi.